A 429-amino-acid polypeptide reads, in one-letter code: Cytochrome c biogenesis protein CcsB (429 aa).

The next 3 membrane-spanning stretches (helical) occupy residues 14-34, 72-92, and 162-182; these read LKVA…GTAL, SFWF…CSWK, and VGPP…TYGV.

It belongs to the Ccs1/CcsB family. May interact with CcsA.

The protein resides in the cellular thylakoid membrane. In terms of biological role, required during biogenesis of c-type cytochromes (cytochrome c6 and cytochrome f) at the step of heme attachment. This chain is Cytochrome c biogenesis protein CcsB, found in Prochlorococcus marinus (strain SARG / CCMP1375 / SS120).